Here is a 596-residue protein sequence, read N- to C-terminus: Arginine--tRNA ligase (596 aa).

The 'HIGH' region signature appears at alanine 128–histidine 138.

The protein belongs to the class-I aminoacyl-tRNA synthetase family. Monomer.

The protein resides in the cytoplasm. The catalysed reaction is tRNA(Arg) + L-arginine + ATP = L-arginyl-tRNA(Arg) + AMP + diphosphate. This Acinetobacter baylyi (strain ATCC 33305 / BD413 / ADP1) protein is Arginine--tRNA ligase.